Consider the following 238-residue polypeptide: Ribonuclease PH (238 aa).

Phosphate contacts are provided by residues R86 and 124 to 126; that span reads GTR.

It belongs to the RNase PH family. In terms of assembly, homohexameric ring arranged as a trimer of dimers.

It catalyses the reaction tRNA(n+1) + phosphate = tRNA(n) + a ribonucleoside 5'-diphosphate. Functionally, phosphorolytic 3'-5' exoribonuclease that plays an important role in tRNA 3'-end maturation. Removes nucleotide residues following the 3'-CCA terminus of tRNAs; can also add nucleotides to the ends of RNA molecules by using nucleoside diphosphates as substrates, but this may not be physiologically important. Probably plays a role in initiation of 16S rRNA degradation (leading to ribosome degradation) during starvation. In Vibrio parahaemolyticus serotype O3:K6 (strain RIMD 2210633), this protein is Ribonuclease PH.